Consider the following 247-residue polypeptide: ATP synthase subunit a, chloroplastic (247 aa).

The next 5 membrane-spanning stretches (helical) occupy residues 38-58, 95-115, 134-154, 199-219, and 220-240; these read QVLITSWVVIAILLGSAIIAV, VPFIGTMFLFIFVSNWSGALL, INTTVALALLTSVAYFYAGLS, LVVVVLVSLVPLVVPIPVMFL, and GLFTSGIQALIFATLAAAYIG.

This sequence belongs to the ATPase A chain family. In terms of assembly, F-type ATPases have 2 components, CF(1) - the catalytic core - and CF(0) - the membrane proton channel. CF(1) has five subunits: alpha(3), beta(3), gamma(1), delta(1), epsilon(1). CF(0) has four main subunits: a, b, b' and c.

The protein localises to the plastid. Its subcellular location is the chloroplast thylakoid membrane. Its function is as follows. Key component of the proton channel; it plays a direct role in the translocation of protons across the membrane. The protein is ATP synthase subunit a, chloroplastic of Cucumis sativus (Cucumber).